The following is a 114-amino-acid chain: Gamma-glutamylcyclotransferase family protein ytfP (114 aa).

This sequence belongs to the gamma-glutamylcyclotransferase family.

Its subcellular location is the cytoplasm. In terms of biological role, may play a role in antibiotic biosynthesis. The sequence is that of Gamma-glutamylcyclotransferase family protein ytfP (ytfP) from Citrobacter rodentium (strain ICC168) (Citrobacter freundii biotype 4280).